A 411-amino-acid polypeptide reads, in one-letter code: MTSTLPYLTSPPATHPSNSDHKKLRSACDSCHQCKVKCSGGSPCFRCTSKGLNCRYGYQNRAGKPKGSKNRKTLEREHQLRMEWLTSQLRDANGGLGNLNIDLSDPTTLLPSPFFQSTRWKQGHMLPQSSVQPTPANQCIKSTEHESECLPTPQGLDTWTMDLGPIAQTPRESTSESLEAFTTPISFTGGGETYLRQLSDPTTPISFGFPSPHARLDGTGDPCACVQTQAVNISTLHQLTCRDRSDRFDLAMKSITSTLETCEKFVVCEACDKSVASILLTLSAIELIFTLFEQLTMNNRRLSPPEEEQRLIPCSLGDYKVTKEESQAIRNVLVKMTLSKGKQALNALQNLVNGSVDFLDESGPCEASQHDSNNANEPMLSGLSVTDRNYMTQCISRKNAALEVLMAAVAV.

A compositionally biased stretch (polar residues) spans 1-17; sequence MTSTLPYLTSPPATHPS. The tract at residues 1 to 21 is disordered; sequence MTSTLPYLTSPPATHPSNSDH. The segment at residues 28 to 54 is a DNA-binding region (zn(2)-C6 fungal-type); sequence CDSCHQCKVKCSGGSPCFRCTSKGLNC.

Its subcellular location is the nucleus. Functionally, transcription factor; part of the gene cluster that mediates the biosynthesis of hexadehydro-astechrome (HAS), a tryptophan-derived iron(III)-complex that acts as a virulence factor in infected mice. Positively regulates the expression of the HAS biosynthetic genes. The sequence is that of C6 finger domain transcription factor hasA from Aspergillus fumigatus (strain CBS 144.89 / FGSC A1163 / CEA10) (Neosartorya fumigata).